The primary structure comprises 149 residues: Large ribosomal subunit protein bL9 (149 aa).

N6-acetyllysine is present on lysine 89.

This sequence belongs to the bacterial ribosomal protein bL9 family.

Its function is as follows. Binds to the 23S rRNA. In Shigella dysenteriae serotype 1 (strain Sd197), this protein is Large ribosomal subunit protein bL9.